The sequence spans 300 residues: Lysophosphatidic acid:oleoyl-CoA acyltransferase 1 (300 aa).

Residues 33–53 form a helical membrane-spanning segment; the sequence is LLGILGVKTIIMLPLIMLYLL. The short motif at 101-106 is the HXXXXD motif element; the sequence is CTSPLD.

Belongs to the 1-acyl-sn-glycerol-3-phosphate acyltransferase family.

Its subcellular location is the lipid droplet. The protein localises to the endoplasmic reticulum membrane. The enzyme catalyses a 1-acyl-sn-glycero-3-phosphate + an acyl-CoA = a 1,2-diacyl-sn-glycero-3-phosphate + CoA. It carries out the reaction 1-hexadecanoyl-sn-glycero-3-phosphate + (9Z)-octadecenoyl-CoA = 1-hexadecanoyl-2-(9Z-octadecenoyl)-sn-glycero-3-phosphate + CoA. In terms of biological role, acyl-CoA-dependent lysophosphatidic acid acyltransferase with preference for oleoyl-CoA. Involved in triacylglyceride homeostasis and lipid droplet formation. Involved in vacuolar protein sorting. In Saccharomyces cerevisiae (strain ATCC 204508 / S288c) (Baker's yeast), this protein is Lysophosphatidic acid:oleoyl-CoA acyltransferase 1.